Consider the following 146-residue polypeptide: Hemoglobin subunit beta-1 (146 aa).

The 145-residue stretch at 2 to 146 (HWTAEEKQLI…VSHSLARRYH (145 aa)) folds into the Globin domain. Residues histidine 63 and histidine 92 each contribute to the heme b site.

Belongs to the globin family. As to quaternary structure, the major hemoglobin component (HbIII) is a tetramer of two alpha-2 chains and two beta-1 chains. In terms of tissue distribution, red blood cells.

In terms of biological role, involved in oxygen transport from the lung to the various peripheral tissues. The protein is Hemoglobin subunit beta-1 (HBB1) of Varanus albigularis (White-throated monitor).